Reading from the N-terminus, the 223-residue chain is Large ribosomal subunit protein bL21 (223 aa).

The protein belongs to the bacterial ribosomal protein bL21 family. Part of the 50S ribosomal subunit. Contacts protein L20.

Its function is as follows. This protein binds to 23S rRNA in the presence of protein L20. This is Large ribosomal subunit protein bL21 from Mesorhizobium japonicum (strain LMG 29417 / CECT 9101 / MAFF 303099) (Mesorhizobium loti (strain MAFF 303099)).